We begin with the raw amino-acid sequence, 286 residues long: Ribose-5-phosphate isomerase (286 aa).

It belongs to the ribose 5-phosphate isomerase family.

The protein localises to the cytoplasm. It carries out the reaction aldehydo-D-ribose 5-phosphate = D-ribulose 5-phosphate. It functions in the pathway carbohydrate degradation; pentose phosphate pathway; D-ribose 5-phosphate from D-ribulose 5-phosphate (non-oxidative stage): step 1/1. The protein is Ribose-5-phosphate isomerase (RKI1) of Mycosarcoma maydis (Corn smut fungus).